Consider the following 362-residue polypeptide: D-alanine--D-alanine ligase (362 aa).

Residues 134-345 (KILAQRAGVP…YPDLITRLIR (212 aa)) form the ATP-grasp domain. An ATP-binding site is contributed by 170-225 (GQLGTSNLFVKPSNQGSSVGITHVTDDSNYAEALAEAFKYDDKVLVEEGIVGTEVE). Mg(2+) contacts are provided by Asp-298, Glu-312, and Asn-314.

Belongs to the D-alanine--D-alanine ligase family. The cofactor is Mg(2+). Requires Mn(2+) as cofactor.

The protein localises to the cytoplasm. It catalyses the reaction 2 D-alanine + ATP = D-alanyl-D-alanine + ADP + phosphate + H(+). It participates in cell wall biogenesis; peptidoglycan biosynthesis. Functionally, cell wall formation. The polypeptide is D-alanine--D-alanine ligase (Lactobacillus delbrueckii subsp. bulgaricus (strain ATCC BAA-365 / Lb-18)).